The chain runs to 555 residues: Formate--tetrahydrofolate ligase (555 aa).

An ATP-binding site is contributed by 64–71 (TKAGIGKT).

This sequence belongs to the formate--tetrahydrofolate ligase family.

The enzyme catalyses (6S)-5,6,7,8-tetrahydrofolate + formate + ATP = (6R)-10-formyltetrahydrofolate + ADP + phosphate. The protein operates within one-carbon metabolism; tetrahydrofolate interconversion. This chain is Formate--tetrahydrofolate ligase, found in Bacteroides thetaiotaomicron (strain ATCC 29148 / DSM 2079 / JCM 5827 / CCUG 10774 / NCTC 10582 / VPI-5482 / E50).